Here is a 561-residue protein sequence, read N- to C-terminus: Nucleoprotein (561 aa).

The binding site for the cap structure m7GTP stretch occupies residues V52 to I237. The interval S336–Q355 is disordered. The Mn(2+) site is built by D380 and E382. Zn(2+)-binding residues include E390, C497, H500, and C521. D525 is a Mn(2+) binding site.

This sequence belongs to the arenaviridae nucleocapsid protein family. Homomultimerizes to form the nucleocapsid. Binds to viral genomic RNA. Interacts with glycoprotein G2. Interacts with protein Z; this interaction probably directs the encapsidated genome to budding sites. Interacts with protein L; this interaction does not interfere with Z-L interaction. Interacts with host IKBKE (via Protein kinase domain); the interaction inhibits IKBKE kinase activity.

It is found in the virion. It localises to the host cytoplasm. In terms of biological role, encapsidates the genome, protecting it from nucleases. The encapsidated genomic RNA is termed the nucleocapsid (NC). Serves as template for viral transcription and replication. The increased presence of protein N in host cell does not seem to trigger the switch from transcription to replication as observed in other negative strain RNA viruses. Through the interaction with host IKBKE, strongly inhibits the phosphorylation and nuclear translocation of host IRF3, a protein involved in interferon activation pathway, leading to the inhibition of interferon-beta and IRF3-dependent promoters activation. Also encodes a functional 3'-5' exoribonuclease that degrades preferentially dsRNA substrates and thereby participates in the suppression of interferon induction. The chain is Nucleoprotein from Cavia cutleri (Guinea pig).